Here is a 266-residue protein sequence, read N- to C-terminus: Large ribosomal subunit protein eL8 (266 aa).

Residues lysine 11, lysine 20, and lysine 21 each participate in a glycyl lysine isopeptide (Lys-Gly) (interchain with G-Cter in SUMO2) cross-link. At lysine 34 the chain carries N6-acetyllysine. Lysine 48 participates in a covalent cross-link: Glycyl lysine isopeptide (Lys-Gly) (interchain with G-Cter in SUMO2). An N6-acetyllysine; alternate modification is found at lysine 97. Lysine 97 participates in a covalent cross-link: Glycyl lysine isopeptide (Lys-Gly) (interchain with G-Cter in SUMO2); alternate. Lysine 125 participates in a covalent cross-link: Glycyl lysine isopeptide (Lys-Gly) (interchain with G-Cter in SUMO2). At lysine 217 the chain carries N6-acetyllysine. Residue lysine 245 forms a Glycyl lysine isopeptide (Lys-Gly) (interchain with G-Cter in SUMO2) linkage.

This sequence belongs to the eukaryotic ribosomal protein eL8 family. In terms of assembly, component of the large ribosomal subunit. Interacts with CRY1. Interacts with DICER1, AGO2, TARBP2, MOV10 and EIF6; they form a large RNA-induced silencing complex (RISC).

Its subcellular location is the cytoplasm. In terms of biological role, component of the large ribosomal subunit. The ribosome is a large ribonucleoprotein complex responsible for the synthesis of proteins in the cell. The chain is Large ribosomal subunit protein eL8 (Rpl7a) from Rattus norvegicus (Rat).